Here is a 340-residue protein sequence, read N- to C-terminus: Extracellular matrix protein-binding protein emp (340 aa).

Residues 1-26 (MKKKLLVLTMSTLFATQLINSNHAKA) form the signal peptide.

Its subcellular location is the cell surface. Its function is as follows. Adhesin that binds to the host cell extracellular matrix proteins fibronectin, fibrinogen, collagen, and vitronectin. The protein is Extracellular matrix protein-binding protein emp (emp) of Staphylococcus aureus (strain Mu50 / ATCC 700699).